Reading from the N-terminus, the 577-residue chain is MPKTISVRVTTMDAELEFAIQPNTTGKQLFDQVVKTIGLREVWFFGLQYQDTKAFSTWLKLNKKVTAQDVRKESPLLFKFRAKFYPEDVSEELIQDITQRLFFLQVKEGILNDDIYCPPETAVLLASYAVQSKYGDFNKEVHKSGYLAGDKLLPQRVLEQHKLNKDQWEERIQVWHEEHRGMLREDAVLEYLKIAQDLEMYGVNYFSIKNKKGSELWLGVDALGLNIYEQNDRLTPKIGFPWSEIRNISFNDKKFVIKPIDKKAPDFVFYAPRLRINKRILALCMGNHELYMRRRKPDTIEVQQMKAQAREEKHQKQMERALLENEKKKRELAEKEKEKIEREKEELMEKLKQIEEQTKKAQQELEEQTRRALELEQERKRAQSEAEKLAKERQEAEEAKEALLQASRDQKKTQEQLASEMAELTARISQLEMARKKKESEAVEWQQKAQMVQEDLEKTRAELKTAMSTPHVAEPAENEHDEQDENGAEASAELRADAMAKDRSEEERTTEAEKNERVQKHLKALTSELANARDESKKTANDMIHAENMRLGRDKYKTLRQIRQGNTKQRIDEFESM.

In terms of domain architecture, FERM spans 2-295 (PKTISVRVTT…GNHELYMRRR (294 aa)). The residue at position 74 (Ser-74) is a Phosphoserine. Position 79 is an N6-acetyllysine (Lys-79). Position 83 is an N6-succinyllysine (Lys-83). A [IL]-x-C-x-x-[DE] motif motif is present at residues 115–120 (IYCPPE). Position 116 is a phosphotyrosine (Tyr-116). Cys-117 carries the post-translational modification S-nitrosocysteine. An N6-acetyllysine mark is found at Lys-139 and Lys-165. 3 disordered regions span residues 322 to 342 (LLEN…KIER), 358 to 419 (TKKA…QLAS), and 468 to 518 (STPH…NERV). The span at 358–401 (TKKAQQELEEQTRRALELEQERKRAQSEAEKLAKERQEAEEAKE) shows a compositional bias: basic and acidic residues. Ser-407 is subject to Phosphoserine. Basic and acidic residues predominate over residues 492–518 (AELRADAMAKDRSEEERTTEAEKNERV). Position 527 is a phosphoserine (Ser-527). Thr-558 carries the post-translational modification Phosphothreonine; by ROCK2 and STK10.

As to quaternary structure, in resting T-cells, part of a PAG1-NHERF1-MSN complex which is disrupted upon TCR activation. Interacts with NHERF1. Interacts with PPP1R16B. Interacts with SELPLG and SYK; these interactions mediate the activation of SYK by SELPLG. Interacts with PDPN (via cytoplasmic domain); this interaction activates RHOA and promotes epithelial-mesenchymal transition. Interacts with SPN/CD43 cytoplasmic tail. Interacts with CD44. Interacts with ICAM2. Interacts with ICAM3 (via C-terminus). Interacts with PDZD8. Interacts with F-actin. Interacts with CD46. Interacts with PTPN6. In terms of processing, phosphorylation on Thr-558 by STK10 negatively regulates lymphocyte migration and polarization. Phosphorylation on Thr-558 is crucial for the formation of microvilli-like structures. Phosphorylation by ROCK2 suppresses the head-to-tail association of the N-terminal and C-terminal halves resulting in an opened conformation which is capable of actin and membrane-binding. Post-translationally, S-nitrosylation of Cys-117 is induced by interferon-gamma and oxidatively-modified low-densitity lipoprotein (LDL(ox)) implicating the iNOS-S100A8/9 transnitrosylase complex.

The protein resides in the cell membrane. It is found in the cytoplasm. It localises to the cytoskeleton. Its subcellular location is the apical cell membrane. The protein localises to the cell projection. The protein resides in the microvillus membrane. It is found in the microvillus. Its function is as follows. Ezrin-radixin-moesin (ERM) family protein that connects the actin cytoskeleton to the plasma membrane and thereby regulates the structure and function of specific domains of the cell cortex. Tethers actin filaments by oscillating between a resting and an activated state providing transient interactions between moesin and the actin cytoskeleton. Once phosphorylated on its C-terminal threonine, moesin is activated leading to interaction with F-actin and cytoskeletal rearrangement. These rearrangements regulate many cellular processes, including cell shape determination, membrane transport, and signal transduction. The role of moesin is particularly important in immunity acting on both T and B-cells homeostasis and self-tolerance, regulating lymphocyte egress from lymphoid organs. Modulates phagolysosomal biogenesis in macrophages. Also participates in immunologic synapse formation. In Mus musculus (Mouse), this protein is Moesin.